The chain runs to 507 residues: Steroid (22S)-hydroxylase (507 aa).

The chain crosses the membrane as a helical span at residues 12-32; the sequence is LLFFLPYILLALLTFYTTTVA. Heme is bound at residue Cys-444.

It belongs to the cytochrome P450 family. Requires heme as cofactor.

Its subcellular location is the membrane. It carries out the reaction a C27-steroid + reduced [NADPH--hemoprotein reductase] + O2 = a (22S)-22-hydroxy C27-steroid + oxidized [NADPH--hemoprotein reductase] + H2O + H(+). It catalyses the reaction a C28-steroid + reduced [NADPH--hemoprotein reductase] + O2 = a (22S)-22-hydroxy C28-steroid + oxidized [NADPH--hemoprotein reductase] + H2O + H(+). The enzyme catalyses campesterol + reduced [NADPH--hemoprotein reductase] + O2 = (22S)-22-hydroxycampesterol + oxidized [NADPH--hemoprotein reductase] + H2O + H(+). The catalysed reaction is campestanol + reduced [NADPH--hemoprotein reductase] + O2 = 6-deoxycathasterone + oxidized [NADPH--hemoprotein reductase] + H2O + H(+). The protein operates within plant hormone biosynthesis; brassinosteroid biosynthesis. Functionally, involved in reduction steps of the biosynthesis of plant campesterol-derivative steroids, ending to castasterone (CS) but missing brassinolide (BL). Catalyzes the conversion of campesterol (CR) to (22S)-22-hydroxycampesterol (22-OHCR, 22-hydroxyCR) and of campestanol (CN) to 6-deoxycathasterone (6-deoxoCT). The protein is Steroid (22S)-hydroxylase of Brachypodium distachyon (Purple false brome).